The chain runs to 231 residues: Orotate phosphoribosyltransferase (231 aa).

Lys29 contributes to the 5-phospho-alpha-D-ribose 1-diphosphate binding site. Position 37-38 (37-38 (FF)) interacts with orotate. 5-phospho-alpha-D-ribose 1-diphosphate contacts are provided by residues 75–76 (YK), Arg107, Lys108, Lys111, His113, and 133–141 (DDVISRCTA). Positions 137 and 165 each coordinate orotate.

It belongs to the purine/pyrimidine phosphoribosyltransferase family. PyrE subfamily. In terms of assembly, homodimer.

It catalyses the reaction orotidine 5'-phosphate + diphosphate = orotate + 5-phospho-alpha-D-ribose 1-diphosphate. It participates in pyrimidine metabolism; UMP biosynthesis via de novo pathway; UMP from orotate: step 1/2. Its function is as follows. Catalyzes the transfer of a ribosyl phosphate group from 5-phosphoribose 1-diphosphate to orotate, leading to the formation of orotidine monophosphate (OMP). This chain is Orotate phosphoribosyltransferase (URA5), found in Podospora anserina (Pleurage anserina).